The following is a 509-amino-acid chain: Methylthioalkylmalate synthase 1-1, chloroplastic (509 aa).

The N-terminal 55 residues, 1–55 (MSFSPTYSIVMASPLLTSSQMIPTTGSTVGFRSILPFGSLRLTRPYKKTSLFISY), are a transit peptide targeting the chloroplast. Residues 91–365 (VRVYDTTLRD…YTRIDTRQIM (275 aa)) form the Pyruvate carboxyltransferase domain. Mn(2+)-binding residues include D100, H298, and H300.

The protein belongs to the alpha-IPM synthase/homocitrate synthase family. Monomer. Mn(2+) is required as a cofactor. Requires Co(2+) as cofactor.

The protein localises to the plastid. It is found in the chloroplast. It carries out the reaction 4-methylsulfanyl-2-oxobutanoate + acetyl-CoA + H2O = 2-(2-methylsulfanyl)ethylmalate + CoA + H(+). The protein operates within secondary metabolite biosynthesis. With respect to regulation, inhibited by EDTA, Cu(2+) and Zn(2+). In terms of biological role, determines the side chain length of aliphatic glucosinolate structures. Involved in the biosynthesis of glucosinolate derivative natural products such as 6-(methylsulfinyl)hexylisothiocyanate (6-MSITC), a compound found in wasabi with diverse health-promoting properties. Catalyzes the conversion of 4-methylsulfanyl-2-oxobutanoate (4-MTOB) into 2-(2-methylsulfanyl)ethylmalate (2-(2-MT)EM). The polypeptide is Methylthioalkylmalate synthase 1-1, chloroplastic (Eutrema japonicum (Wasabi plant)).